The primary structure comprises 230 residues: Cell division ATP-binding protein FtsE (230 aa).

Positions 4 to 229 (IEMRDVVKKY…DESKGEYGYD (226 aa)) constitute an ABC transporter domain. 37-44 (GPSGAGKS) provides a ligand contact to ATP.

This sequence belongs to the ABC transporter superfamily. In terms of assembly, homodimer. Interacts with FtsX; forms a membrane-associated complex. Interacts with pcsB.

The protein resides in the cell membrane. The enzyme catalyses ATP + H2O = ADP + phosphate + H(+). Part of the ABC transporter FtsEX involved in cellular division. Has ATPase activity. Essential for cell division and viability. The polypeptide is Cell division ATP-binding protein FtsE (Streptococcus pneumoniae serotype 2 (strain D39 / NCTC 7466)).